Reading from the N-terminus, the 423-residue chain is Histidine--tRNA ligase (423 aa).

Belongs to the class-II aminoacyl-tRNA synthetase family.

The protein localises to the cytoplasm. The enzyme catalyses tRNA(His) + L-histidine + ATP = L-histidyl-tRNA(His) + AMP + diphosphate + H(+). The chain is Histidine--tRNA ligase from Picrophilus torridus (strain ATCC 700027 / DSM 9790 / JCM 10055 / NBRC 100828 / KAW 2/3).